The sequence spans 426 residues: Glutamyl-tRNA(Gln) amidotransferase subunit D (426 aa).

The 332-residue stretch at 82 to 413 folds into the Asparaginase/glutaminase domain; the sequence is KNISILSTGG…KDAKKLICKN (332 aa). Active-site residues include Thr-92, Thr-168, Asp-169, and Lys-245.

It belongs to the asparaginase 1 family. GatD subfamily. As to quaternary structure, heterodimer of GatD and GatE.

The catalysed reaction is L-glutamyl-tRNA(Gln) + L-glutamine + ATP + H2O = L-glutaminyl-tRNA(Gln) + L-glutamate + ADP + phosphate + H(+). Its function is as follows. Allows the formation of correctly charged Gln-tRNA(Gln) through the transamidation of misacylated Glu-tRNA(Gln) in organisms which lack glutaminyl-tRNA synthetase. The reaction takes place in the presence of glutamine and ATP through an activated gamma-phospho-Glu-tRNA(Gln). The GatDE system is specific for glutamate and does not act on aspartate. The protein is Glutamyl-tRNA(Gln) amidotransferase subunit D of Methanococcus vannielii (strain ATCC 35089 / DSM 1224 / JCM 13029 / OCM 148 / SB).